The following is a 354-amino-acid chain: Phospho-N-acetylmuramoyl-pentapeptide-transferase (354 aa).

10 helical membrane passes run 27–47 (ATLL…INML), 73–93 (TMGG…WMDV), 97–117 (LVWA…LDDY), 138–158 (FVVA…YVPV), 162–182 (LYVP…VGAG), 193–213 (GLAI…AYLA), 230–250 (AGEL…FLWF), 256–276 (AVFM…VIAV), 282–302 (IVLA…IVQV), and 331–351 (TVVI…LATL).

The protein belongs to the glycosyltransferase 4 family. MraY subfamily. Requires Mg(2+) as cofactor.

The protein resides in the cell inner membrane. The catalysed reaction is UDP-N-acetyl-alpha-D-muramoyl-L-alanyl-gamma-D-glutamyl-meso-2,6-diaminopimeloyl-D-alanyl-D-alanine + di-trans,octa-cis-undecaprenyl phosphate = di-trans,octa-cis-undecaprenyl diphospho-N-acetyl-alpha-D-muramoyl-L-alanyl-D-glutamyl-meso-2,6-diaminopimeloyl-D-alanyl-D-alanine + UMP. It functions in the pathway cell wall biogenesis; peptidoglycan biosynthesis. Its function is as follows. Catalyzes the initial step of the lipid cycle reactions in the biosynthesis of the cell wall peptidoglycan: transfers peptidoglycan precursor phospho-MurNAc-pentapeptide from UDP-MurNAc-pentapeptide onto the lipid carrier undecaprenyl phosphate, yielding undecaprenyl-pyrophosphoryl-MurNAc-pentapeptide, known as lipid I. The protein is Phospho-N-acetylmuramoyl-pentapeptide-transferase of Novosphingobium aromaticivorans (strain ATCC 700278 / DSM 12444 / CCUG 56034 / CIP 105152 / NBRC 16084 / F199).